Reading from the N-terminus, the 162-residue chain is 6,7-dimethyl-8-ribityllumazine synthase (162 aa).

5-amino-6-(D-ribitylamino)uracil is bound by residues F22, 56–58 (TFE), and 80–82 (AVI). 85–86 (GT) contacts (2S)-2-hydroxy-3-oxobutyl phosphate. The Proton donor role is filled by H88. M113 contributes to the 5-amino-6-(D-ribitylamino)uracil binding site. R127 is a binding site for (2S)-2-hydroxy-3-oxobutyl phosphate.

Belongs to the DMRL synthase family.

It catalyses the reaction (2S)-2-hydroxy-3-oxobutyl phosphate + 5-amino-6-(D-ribitylamino)uracil = 6,7-dimethyl-8-(1-D-ribityl)lumazine + phosphate + 2 H2O + H(+). It functions in the pathway cofactor biosynthesis; riboflavin biosynthesis; riboflavin from 2-hydroxy-3-oxobutyl phosphate and 5-amino-6-(D-ribitylamino)uracil: step 1/2. Functionally, catalyzes the formation of 6,7-dimethyl-8-ribityllumazine by condensation of 5-amino-6-(D-ribitylamino)uracil with 3,4-dihydroxy-2-butanone 4-phosphate. This is the penultimate step in the biosynthesis of riboflavin. This Anaeromyxobacter dehalogenans (strain 2CP-1 / ATCC BAA-258) protein is 6,7-dimethyl-8-ribityllumazine synthase.